The chain runs to 348 residues: sn-glycerol-3-phosphate import ATP-binding protein UgpC 3 (348 aa).

The region spanning 4-234 is the ABC transporter domain; sequence INIVDVKKNY…PASLFVAGFI (231 aa). Residue 36 to 43 coordinates ATP; that stretch reads GPSGCGKS.

Belongs to the ABC transporter superfamily. sn-glycerol-3-phosphate importer (TC 3.A.1.1.3) family. As to quaternary structure, the complex is composed of two ATP-binding proteins (UgpC), two transmembrane proteins (UgpA and UgpE) and a solute-binding protein (UgpB).

It is found in the cell inner membrane. It catalyses the reaction sn-glycerol 3-phosphate(out) + ATP + H2O = sn-glycerol 3-phosphate(in) + ADP + phosphate + H(+). Functionally, part of the ABC transporter complex UgpBAEC involved in sn-glycerol-3-phosphate (G3P) import. Responsible for energy coupling to the transport system. The polypeptide is sn-glycerol-3-phosphate import ATP-binding protein UgpC 3 (Rhizobium etli (strain ATCC 51251 / DSM 11541 / JCM 21823 / NBRC 15573 / CFN 42)).